The primary structure comprises 380 residues: DNA replication and repair protein RecF (380 aa).

30–37 contacts ATP; it reads GNNAQGKS.

The protein belongs to the RecF family.

It is found in the cytoplasm. In terms of biological role, the RecF protein is involved in DNA metabolism; it is required for DNA replication and normal SOS inducibility. RecF binds preferentially to single-stranded, linear DNA. It also seems to bind ATP. The polypeptide is DNA replication and repair protein RecF (Rippkaea orientalis (strain PCC 8801 / RF-1) (Cyanothece sp. (strain PCC 8801))).